The following is a 1403-amino-acid chain: Nidogen-2 (1403 aa).

The signal sequence occupies residues 1 to 30 (MFRDPTAGWLTPPSPLSLLVMLLLLSRVGA). Residues 108–274 (PFLADIDTSH…GVWAFHIGSR (167 aa)) enclose the NIDO domain. The interval 323–403 (EDVEYPPVEP…KQGRPVGEGE (81 aa)) is disordered. Residues S386 and S475 are each glycosylated (O-linked (Xyl...) (chondroitin sulfate) serine). The span at 386–395 (SASLDPQTKQ) shows a compositional bias: polar residues. One can recognise an EGF-like 1 domain in the interval 507–547 (NLETCEHSHGRCSQHAFCTDYTTGFCCHCQSRFYGNGKHCL). 3 disulfides stabilise this stretch: C511–C524, C518–C533, and C535–C546. The Nidogen G2 beta-barrel domain maps to 551–781 (APHRVNGKVS…GPVEVDSAPV (231 aa)). N681, N716, and N726 each carry an N-linked (GlcNAc...) asparagine glycan. The 42-residue stretch at 782–823 (GVNPCYDGSHTCDTTARCHPGTGVDYTCECTPGFQGDGRSCV) folds into the EGF-like 2 domain. Disulfide bonds link C786/C799, C793/C809, C811/C822, C828/C841, C835/C850, C852/C865, C875/C890, C882/C900, C902/C913, C919/C930, C924/C939, C941/C952, C968/C991, C1002/C1009, C1011/C1033, C1047/C1071, C1082/C1089, and C1091/C1112. The EGF-like 3; calcium-binding domain occupies 824-862 (DVNECATGFHRCGPNSVCVNLVGSYRCECRSGYEFADDQ). The EGF-like 4 domain occupies 871–914 (PPNPCLDGSHTCAPEGQARCIHHGGSSFSCACLPGFIGTGHQCS). One can recognise an EGF-like 5; calcium-binding domain in the interval 915–953 (DVDECAENRCHEAAICYNTPGSFSCRCQPGYRGDGFHCT). The short motif at 946–948 (RGD) is the Cell attachment site element. Thyroglobulin type-1 domains are found at residues 965–1033 (LKPC…PPHC) and 1044–1112 (RTVC…RPAC). The tract at residues 1021–1043 (GTQTPPGSTPPHCGPPPEPTQRP) is disordered. Residues 1027 to 1040 (GSTPPHCGPPPEPT) are compositionally biased toward pro residues. The N-linked (GlcNAc...) asparagine glycan is linked to N1152. LDL-receptor class B repeat units follow at residues 1182–1225 (RMVY…DHFR), 1226–1268 (RTMY…DPIR), 1269–1313 (GNLY…DPFS), 1314–1355 (KLLC…YADH), and 1357–1401 (YHTD…CPTG). R1336 carries the post-translational modification Omega-N-methylarginine.

In terms of assembly, interacts with LAMA2. Interacts with COL13A1. Interacts with EFEMP2. In terms of processing, highly N- and O-glycosylated.

The protein resides in the secreted. It localises to the extracellular space. Its subcellular location is the extracellular matrix. It is found in the basement membrane. Its function is as follows. Cell adhesion glycoprotein. Might be involved in osteoblast differentiation. It probably has a role in cell-extracellular matrix interactions. This Mus musculus (Mouse) protein is Nidogen-2 (Nid2).